Reading from the N-terminus, the 372-residue chain is GTPase Obg (372 aa).

Residues 1–159 (MKFIDEARIE…RMLKLELKVL (159 aa)) form the Obg domain. A disordered region spans residues 128 to 147 (LHFKSSTNRAPRQKTDGKPG). The OBG-type G domain occupies 160–334 (ADVGLLGMPN…LVYAIHDYLV (175 aa)). GTP contacts are provided by residues 166–173 (GMPNAGKS), 191–195 (FTTLA), 213–216 (DIPG), 284–287 (NKLD), and 315–317 (SAL). 2 residues coordinate Mg(2+): serine 173 and threonine 193.

It belongs to the TRAFAC class OBG-HflX-like GTPase superfamily. OBG GTPase family. As to quaternary structure, monomer. Mg(2+) is required as a cofactor.

Its subcellular location is the cytoplasm. In terms of biological role, an essential GTPase which binds GTP, GDP and possibly (p)ppGpp with moderate affinity, with high nucleotide exchange rates and a fairly low GTP hydrolysis rate. Plays a role in control of the cell cycle, stress response, ribosome biogenesis and in those bacteria that undergo differentiation, in morphogenesis control. The protein is GTPase Obg of Burkholderia pseudomallei (strain 668).